Consider the following 354-residue polypeptide: Rhodopsin (354 aa).

The Extracellular segment spans residues 1–36 (MNGTEGPNFYIPMSNKTGVVRSPFEYPQYYLAEPWQ). N-linked (GlcNAc...) asparagine glycans are attached at residues Asn2 and Asn15. The chain crosses the membrane as a helical span at residues 37 to 61 (YSILCAYMFLLILLGFPINFMTLYV). Residues 62–73 (TIQHKKLRTPLN) lie on the Cytoplasmic side of the membrane. The chain crosses the membrane as a helical span at residues 74-96 (YILLNLAFANHFMVLCGFTVTMY). Residues 97–110 (SSMNGYFILGATGC) lie on the Extracellular side of the membrane. Cys110 and Cys187 are oxidised to a cystine. A helical transmembrane segment spans residues 111 to 133 (YVEGFFATLGGEIALWSLVVLAI). The 'Ionic lock' involved in activated form stabilization signature appears at 134–136 (ERY). Topologically, residues 134–152 (ERYVVVCKPMSNFRFSENH) are cytoplasmic. The helical transmembrane segment at 153 to 173 (AVMGVAFTWIMALSCAVPPLL) threads the bilayer. Residues 174–202 (GWSRYIPEGMQCSCGVDYYTLKPEVNNES) lie on the Extracellular side of the membrane. A helical transmembrane segment spans residues 203-224 (FVIYMFVVHFTIPLIIIFFCYG). The Cytoplasmic segment spans residues 225–252 (RLVCTVKEAAAQQQESATTQKAEKEVTR). The chain crosses the membrane as a helical span at residues 253–274 (MVIIMVVFFLICWVPYASVAFF). The Extracellular segment spans residues 275 to 286 (IFSNQGSEFGPI). The chain crosses the membrane as a helical span at residues 287 to 308 (FMTVPAFFAKSSSIYNPVIYIM). Lys296 bears the N6-(retinylidene)lysine mark. The Cytoplasmic segment spans residues 309–354 (LNKQFRNCMITTLCCGKNPFGEDDASSAATSKTEASSVSSSQVSPA). Residues Cys322 and Cys323 are each lipidated (S-palmitoyl cysteine). The disordered stretch occupies residues 331-354 (DDASSAATSKTEASSVSSSQVSPA). The span at 334–354 (SSAATSKTEASSVSSSQVSPA) shows a compositional bias: low complexity.

The protein belongs to the G-protein coupled receptor 1 family. Opsin subfamily. In terms of processing, contains one covalently linked retinal chromophore. Upon light absorption, the covalently bound 11-cis-retinal is converted to all-trans-retinal. After hydrolysis of the Schiff base and release of the covalently bound all-trans-retinal, active rhodopsin is regenerated by binding of a fresh molecule of 11-cis-retinal.

It is found in the membrane. The protein localises to the cell projection. Its subcellular location is the cilium. It localises to the photoreceptor outer segment. Functionally, photoreceptor required for image-forming vision at low light intensity. Required for photoreceptor cell viability after birth. Light-induced isomerization of 11-cis to all-trans retinal triggers a conformational change that activates signaling via G-proteins. Subsequent receptor phosphorylation mediates displacement of the bound G-protein alpha subunit by arrestin and terminates signaling. The sequence is that of Rhodopsin (RHO) from Bufo bufo (European toad).